We begin with the raw amino-acid sequence, 386 residues long: Antilisterial bacteriocin subtilosin biosynthesis protein AlbE (386 aa).

Involved in the production of the bacteriocin subtilosin. This is Antilisterial bacteriocin subtilosin biosynthesis protein AlbE (albE) from Bacillus subtilis (strain 168).